We begin with the raw amino-acid sequence, 386 residues long: uncharacterized protein (386 aa).

The next 9 membrane-spanning stretches (helical) occupy residues asparagine 48 to tyrosine 68, proline 78 to isoleucine 98, leucine 136 to isoleucine 156, tyrosine 171 to isoleucine 191, phenylalanine 213 to leucine 233, valine 253 to leucine 273, phenylalanine 285 to valine 305, tryptophan 316 to leucine 336, and phenylalanine 344 to alanine 364.

This sequence belongs to the CDP-alcohol phosphatidyltransferase class-I family.

The protein localises to the membrane. This is an uncharacterized protein from Schizosaccharomyces pombe (strain 972 / ATCC 24843) (Fission yeast).